The primary structure comprises 435 residues: Gamma-glutamyl phosphate reductase (435 aa).

It belongs to the gamma-glutamyl phosphate reductase family.

Its subcellular location is the cytoplasm. The catalysed reaction is L-glutamate 5-semialdehyde + phosphate + NADP(+) = L-glutamyl 5-phosphate + NADPH + H(+). It participates in amino-acid biosynthesis; L-proline biosynthesis; L-glutamate 5-semialdehyde from L-glutamate: step 2/2. In terms of biological role, catalyzes the NADPH-dependent reduction of L-glutamate 5-phosphate into L-glutamate 5-semialdehyde and phosphate. The product spontaneously undergoes cyclization to form 1-pyrroline-5-carboxylate. The sequence is that of Gamma-glutamyl phosphate reductase from Nostoc punctiforme (strain ATCC 29133 / PCC 73102).